Here is a 386-residue protein sequence, read N- to C-terminus: MATTKSFLILFFMILATTSSTCAKLEEMVTVLSIDGGGIKGIIPAIILEFLEGQLQEVDNNKDARLADYFDVIGGTSTGGLLTAMITTPNENNRPFAAAKDIVPFYFEHGPHIFNYSGSIIGPMYDGKYLLQVLQEKLGETRVHQALTEVAISSFDIKTNKPVIFTKSNLAKSPELDAKMYDICYSTAAAPIYFPPHYFITHTSNGDIYEFNLVDGGVATVGDPALLSLSVATRLAQEDPAFSSIKSLDYKQMLLLSLGTGTNSEFDKTYTAQEAAKWGPLRWMLAIQQMTNAASSYMTDYYISTVFQARHSQNNYLRVQENALTGTTTEMDDASEANMELLVQVGETLLKKPVSKDSPETYEEALKRFAKLLSDRKKLRANKASY.

The signal sequence occupies residues 1 to 23; that stretch reads MATTKSFLILFFMILATTSSTCA. Residues 32–229 form the PNPLA domain; it reads LSIDGGGIKG…TVGDPALLSL (198 aa). The GXGXXG signature appears at 36–41; that stretch reads GGGIKG. The GXSXG motif lies at 75–79; sequence GTSTG. Residue Ser77 is the Nucleophile of the active site. N-linked (GlcNAc...) asparagine glycosylation is present at Asn115. The active-site Proton acceptor is Asp215. The DGA/G signature appears at 215-217; the sequence is DGG.

It belongs to the patatin family. Tuber.

It localises to the vacuole. Probable lipolytic acyl hydrolase (LAH), an activity which is thought to be involved in the response of tubers to pathogens. This Solanum tuberosum (Potato) protein is Patatin group M-1.